The sequence spans 101 residues: Small ribosomal subunit protein uS14 (101 aa).

Residues 53–72 (RDAAAVRVRNRDSHDGRPRG) form a disordered region. The span at 61-70 (RNRDSHDGRP) shows a compositional bias: basic and acidic residues.

Belongs to the universal ribosomal protein uS14 family. Part of the 30S ribosomal subunit. Contacts proteins S3 and S10.

Binds 16S rRNA, required for the assembly of 30S particles and may also be responsible for determining the conformation of the 16S rRNA at the A site. The chain is Small ribosomal subunit protein uS14 from Corynebacterium glutamicum (strain R).